The sequence spans 160 residues: Small ribosomal subunit protein uS7B (160 aa).

This sequence belongs to the universal ribosomal protein uS7 family. In terms of assembly, part of the 30S ribosomal subunit. Contacts proteins S9 and S11.

In terms of biological role, one of the primary rRNA binding proteins, it binds directly to 16S rRNA where it nucleates assembly of the head domain of the 30S subunit. Is located at the subunit interface close to the decoding center, probably blocks exit of the E-site tRNA. This Aquifex aeolicus (strain VF5) protein is Small ribosomal subunit protein uS7B.